The following is a 522-amino-acid chain: 2-isopropylmalate synthase (522 aa).

Residues 5 to 267 (VIIFDTTLRD…ETGINAKEIH (263 aa)) form the Pyruvate carboxyltransferase domain. Residues Asp14, His202, His204, and Asn238 each coordinate Mn(2+). Positions 392–522 (QLQQLVVQSD…MQKNRELGGV (131 aa)) are regulatory domain.

Belongs to the alpha-IPM synthase/homocitrate synthase family. LeuA type 1 subfamily. In terms of assembly, homodimer. It depends on Mn(2+) as a cofactor.

It is found in the cytoplasm. The catalysed reaction is 3-methyl-2-oxobutanoate + acetyl-CoA + H2O = (2S)-2-isopropylmalate + CoA + H(+). Its pathway is amino-acid biosynthesis; L-leucine biosynthesis; L-leucine from 3-methyl-2-oxobutanoate: step 1/4. In terms of biological role, catalyzes the condensation of the acetyl group of acetyl-CoA with 3-methyl-2-oxobutanoate (2-ketoisovalerate) to form 3-carboxy-3-hydroxy-4-methylpentanoate (2-isopropylmalate). This chain is 2-isopropylmalate synthase, found in Shewanella baltica (strain OS155 / ATCC BAA-1091).